The primary structure comprises 149 residues: Protegrin-4 (149 aa).

The signal sequence occupies residues 1–29 (METQRASLCLGRWSLWLLLLALVVPSASA). A propeptide spanning residues 30–130 (QALSYREAVL…DITCNEVQGV (101 aa)) is cleaved from the precursor. The interval 61 to 80 (DQPPKADEDPGTPKPVSFTV) is disordered. Cystine bridges form between cysteine 85/cysteine 96, cysteine 107/cysteine 124, cysteine 136/cysteine 145, and cysteine 138/cysteine 143. Arginine amide is present on arginine 148.

It belongs to the cathelicidin family.

It is found in the secreted. In terms of biological role, microbicidal activity. This chain is Protegrin-4 (NPG4), found in Sus scrofa (Pig).